We begin with the raw amino-acid sequence, 189 residues long: Selenoprotein S (189 aa).

The chain crosses the membrane as a helical span at residues serine 28 to phenylalanine 48. A VCP/p97-interacting motif (VIM) region spans residues arginine 78–glutamine 90. A disordered region spans residues lysine 115–glycine 189. Serine 140 is modified (phosphoserine). Positions arginine 159–alanine 173 are enriched in gly residues. Position 188 (selenocysteine 188) is a non-standard amino acid, selenocysteine.

This sequence belongs to the selenoprotein S family. Interacts with DERL1 and (via VIM motif) with VCP, suggesting that it forms a membrane complex with DERL1 that serves as a receptor for VCP. Also interacts with DERL2, DERL3 and SELENOK. The SELENOK-SELENOS complex interacts with VCP. Interacts with CCDC47. In terms of processing, truncated SELENOS proteins produced by failed UGA/Sec decoding are ubiquitinated by the CRL2(KLHDC2) and CRL2(KLHDC3) complexes, which recognizes the glycine (Gly) at the C-terminus of truncated SELENOS proteins. Truncated SELENOS proteins produced by failed UGA/Sec decoding are also ubiquitinated by the CRL5(KLHDC1) complex.

It localises to the endoplasmic reticulum membrane. It is found in the cytoplasm. Involved in the degradation process of misfolded endoplasmic reticulum (ER) luminal proteins. Participates in the transfer of misfolded proteins from the ER to the cytosol, where they are destroyed by the proteasome in a ubiquitin-dependent manner. Probably acts by serving as a linker between DERL1, which mediates the retrotranslocation of misfolded proteins into the cytosol, and the ATPase complex VCP, which mediates the translocation and ubiquitination. This Homo sapiens (Human) protein is Selenoprotein S.